An 86-amino-acid chain; its full sequence is Late effector protein 1 (86 aa).

The N-terminal stretch at 1-24 (MRSHQMAAFFAVSLMMMVVLGALS) is a signal peptide.

This sequence belongs to the lep1 family. In terms of assembly, interacts at the cell wall with secreted rep1 repellent peptides.

It localises to the secreted. The protein localises to the cell wall. Functionally, core effector contributing to spore formation and tumor formation at the host plant. Modulates surface hydrophobicity promoting cell-cell or cell-surface contacts. Lep1 and rep1 interact in aerial hyphae to form a strong hydrophobic layer. Plays a crucial role in hyphal aggregation that might be a prerequisite for strong proliferation of diploid cells and for induction of the morphological changes associated with spore formation. This chain is Late effector protein 1, found in Mycosarcoma maydis (Corn smut fungus).